A 418-amino-acid polypeptide reads, in one-letter code: F-box/kelch-repeat protein SKIP20 (418 aa).

An F-box domain is found at 14–61 (DLIPGLPEELAIECLVRVPFQFHSSIKSVCRSWKCVISSRSFIKERIG). The tract at residues 79–104 (PSPAMMEGGEMSQKKKEEEEGESQMT) is disordered. Kelch repeat units lie at residues 104–150 (TQQL…AIQD), 153–206 (KVLL…SVGS), 208–255 (KVYV…SMAT), and 258–314 (GFCV…EFPG).

Part of a SCF (ASK-cullin-F-box) protein ligase complex. Interacts with SKP1A/ASK1 and SPK1B/ASK2.

The protein resides in the nucleus. Its pathway is protein modification; protein ubiquitination. Functionally, component of SCF(ASK-cullin-F-box) E3 ubiquitin ligase complexes, which may mediate the ubiquitination and subsequent proteasomal degradation of target proteins. The polypeptide is F-box/kelch-repeat protein SKIP20 (SKIP20) (Arabidopsis thaliana (Mouse-ear cress)).